The chain runs to 188 residues: Grand meiotic recombination cluster protein 2 (188 aa).

Composition is skewed to polar residues over residues 1–13 and 21–31; these read MSDT…QSSE and ERTNSLKSPDV. The segment at 1–31 is disordered; the sequence is MSDTTEVPRQSSENDQDNNLERTNSLKSPDV.

Functionally, probable transcriptional activator involved in meiotic prophase and synaptonemal complex (SC) assembly. This is Grand meiotic recombination cluster protein 2 (GMC2) from Saccharomyces cerevisiae (strain ATCC 204508 / S288c) (Baker's yeast).